The sequence spans 382 residues: UDP-N-acetylglucosamine--N-acetylmuramyl-(pentapeptide) pyrophosphoryl-undecaprenol N-acetylglucosamine transferase (382 aa).

UDP-N-acetyl-alpha-D-glucosamine contacts are provided by residues 17-19 (TAG), Asn137, Arg179, Ser213, and Gln308.

This sequence belongs to the glycosyltransferase 28 family. MurG subfamily.

The protein resides in the cell membrane. It carries out the reaction di-trans,octa-cis-undecaprenyl diphospho-N-acetyl-alpha-D-muramoyl-L-alanyl-D-glutamyl-meso-2,6-diaminopimeloyl-D-alanyl-D-alanine + UDP-N-acetyl-alpha-D-glucosamine = di-trans,octa-cis-undecaprenyl diphospho-[N-acetyl-alpha-D-glucosaminyl-(1-&gt;4)]-N-acetyl-alpha-D-muramoyl-L-alanyl-D-glutamyl-meso-2,6-diaminopimeloyl-D-alanyl-D-alanine + UDP + H(+). Its pathway is cell wall biogenesis; peptidoglycan biosynthesis. Cell wall formation. Catalyzes the transfer of a GlcNAc subunit on undecaprenyl-pyrophosphoryl-MurNAc-pentapeptide (lipid intermediate I) to form undecaprenyl-pyrophosphoryl-MurNAc-(pentapeptide)GlcNAc (lipid intermediate II). The polypeptide is UDP-N-acetylglucosamine--N-acetylmuramyl-(pentapeptide) pyrophosphoryl-undecaprenol N-acetylglucosamine transferase (Rhodococcus opacus (strain B4)).